A 281-amino-acid chain; its full sequence is Gas vesicle protein L1 (281 aa).

Belongs to the gas vesicle GvpF/GvpL family. May form oligomers. GvpF to GvpM interact with each other in vitro, and may form multi-subunit complex(es). Interacts with GvpC1, GvpN1 and GvpO1.

The protein localises to the gas vesicle. The protein resides in the cytoplasm. Its function is as follows. Proteins GvpF to GvpM might be involved in nucleating gas vesicle formation. A minor component of the gas vesicle. This the only minor gas vesicle protein that binds all the others (including GvpC1, GvpN1 and GvpO1, but not GvpA1), suggesting it might be able to assemble them. Gas vesicles are hollow, gas filled proteinaceous nanostructures found in several microbial planktonic microorganisms. They allow positioning of halobacteria at the optimal depth for growth in the poorly aerated, shallow brine pools of their habitat. In terms of biological role, expression of a 9.5 kb p-vac DNA fragment containing 2 divergently transcribed regions (gvpD-gvpE-gvpF-gvpG-gvpH-gvpI-gvpJ-gvpK-gvpL-gvpM and gvpA-gvpC-gvpN-gvpO) allows H.volcanii to produce gas vesicles. A minimal gas vesicle can be made in H.volcanii by gvpA1-gvpO1 plus gvpF1-gvpG1-gvpJ1-gvpK1-gvpL1-gvpM1; lack of enough GvpJ1 prevents their formation. A similar region restores gas vesicle production in H.halobium without the p-vac locus, but it still has the c-vac locus. This chain is Gas vesicle protein L1 (gvpL11), found in Halobacterium salinarum (strain ATCC 700922 / JCM 11081 / NRC-1) (Halobacterium halobium).